Consider the following 524-residue polypeptide: MNNYPWLTIITLFPISAGLLIPLIPNRGNNLIRWYALGICLIDFLLMTYVFGSQFDFYGQGIQLKEDISWINVIDFHWRVGVDGLSIALVLLTGFITTLATLAAWPVTRNPRLFYFLMLAMYSGQLGLFLAQDLLLFFFMWELELIPVYLLLSMWGGRRRLYAATKFILYTAGGSIFLLAAILTISLWGPNGPILDMETLSKQSYPLGLEILVYLGFLIAYAVKLPVFPFHTWLPDTHGEAHYSTCMLLAGILLKMGGYGFIRINIEMLSDAHRIFAPWLVALGAGQIVYAALVSIAQKNLKRRIAYSSVSHMGFVLIGAGSFSDLGLSGAILQMISHGLIGAGLFFLAGTTYDRSRTLILDDMGGWGSPLPKTFSTFTACAMASLALPGMSGFVAELMIFLGIVASSVYSPLFKAIITCVEGIGIILTPIYLLSMVRKMFYGYNDISLKTLKDSLILDASPREVFIILSLLVPMLGIGFYPDLTLQLWNQKAQEIVSLPSGNEKSLTLISYSYPVEKNFSLHH.

14 helical membrane-spanning segments follow: residues 4-24, 31-51, 87-107, 113-133, 134-154, 167-187, 211-231, 242-262, 275-295, 308-328, 330-350, 386-406, 417-437, and 465-485; these read YPWL…IPLI, LIRW…TYVF, IALV…AWPV, LFYF…LAQD, LLLF…LLSM, FILY…TISL, ILVY…FPFH, HYST…YGFI, IFAP…ALVS, SSVS…DLGL, GAIL…FLAG, LALP…GIVA, IITC…LSMV, and VFII…PDLT.

Belongs to the complex I subunit 4 family.

Its subcellular location is the plastid. It is found in the chloroplast thylakoid membrane. It catalyses the reaction a plastoquinone + NADH + (n+1) H(+)(in) = a plastoquinol + NAD(+) + n H(+)(out). The enzyme catalyses a plastoquinone + NADPH + (n+1) H(+)(in) = a plastoquinol + NADP(+) + n H(+)(out). The protein is NAD(P)H-quinone oxidoreductase chain 4, chloroplastic of Staurastrum punctulatum (Green alga).